Here is a 456-residue protein sequence, read N- to C-terminus: GTPase Der (456 aa).

EngA-type G domains follow at residues 4–169 and 177–352; these read PIVA…PAVE and IKVA…ESHK. GTP contacts are provided by residues 10–17, 57–61, 120–123, 183–190, 230–234, and 295–298; these read GRPNVGKS, DTGGL, NKCE, DTAGI, and NKWD. Residues 353–438 enclose the KH-like domain; that stretch reads RRVSTSVINE…PIILLWRSKK (86 aa).

The protein belongs to the TRAFAC class TrmE-Era-EngA-EngB-Septin-like GTPase superfamily. EngA (Der) GTPase family. In terms of assembly, associates with the 50S ribosomal subunit.

Functionally, GTPase that plays an essential role in the late steps of ribosome biogenesis. The protein is GTPase Der of Nostoc punctiforme (strain ATCC 29133 / PCC 73102).